Here is a 316-residue protein sequence, read N- to C-terminus: Annexin A13 (316 aa).

The N-myristoyl glycine moiety is linked to residue glycine 2. 4 Annexin repeats span residues 14–85 (FDVD…ALLD), 86–157 (RPSE…SLLQ), 169–241 (DLAG…TLVR), and 245–316 (DCED…ALLH).

It belongs to the annexin family. Monomer and homodimer. Detected in epithelial cells in colon and jejunum (at protein level). Detected in epithelial cells in jejunum.

It localises to the apical cell membrane. The protein localises to the cell membrane. It is found in the cytoplasmic vesicle. Binds to membranes enriched in phosphatidylserine or phosphatidylglycerol in a calcium-dependent manner. Half-maximal membrane binding requires about 60 uM calcium. Does not bind to membranes that lack phospholipids with an acidic headgroup. Functionally, binds to membranes enriched in phosphatidylserine or phosphatidylglycerol in a calcium-dependent manner, but requires higher calcium levels for membrane binding than isoform A. Half-maximal membrane binding requires about 320 uM calcium. This Homo sapiens (Human) protein is Annexin A13 (ANXA13).